A 412-amino-acid polypeptide reads, in one-letter code: Phosphoglycerate kinase (412 aa).

Substrate-binding positions include 22 to 24, R37, 60 to 63, R120, and R172; these read DFN and HLGK. Residues K223, G310, E341, and 368-371 contribute to the ATP site; that span reads GGDS.

Belongs to the phosphoglycerate kinase family. As to quaternary structure, monomer.

It is found in the cytoplasm. The catalysed reaction is (2R)-3-phosphoglycerate + ATP = (2R)-3-phospho-glyceroyl phosphate + ADP. It participates in carbohydrate degradation; glycolysis; pyruvate from D-glyceraldehyde 3-phosphate: step 2/5. The polypeptide is Phosphoglycerate kinase (Spiroplasma citri).